We begin with the raw amino-acid sequence, 481 residues long: Anti-sigma-I factor RsgI5 (481 aa).

Topologically, residues methionine 1 to lysine 50 are cytoplasmic. The region spanning histidine 3–lysine 50 is the RsgI N-terminal anti-sigma domain. Residues serine 51–leucine 71 form a helical membrane-spanning segment. Topologically, residues serine 72–aspartate 481 are extracellular. Residues alanine 255–aspartate 339 are disordered. Over residues serine 256–proline 265 the composition is skewed to basic and acidic residues. Composition is skewed to low complexity over residues lysine 266 to aspartate 283 and asparagine 291 to proline 315. The span at alanine 316–threonine 336 shows a compositional bias: pro residues.

In terms of assembly, interacts (via RsgI N-terminal anti-sigma domain) with SigI5.

It is found in the cell membrane. Functionally, anti-sigma factor for SigI5. Negatively regulates SigI5 activity through direct interaction. Binding of the polysaccharide substrate to the extracellular C-terminal sensing domain of RsgI5 may induce a conformational change in its N-terminal cytoplasmic region, leading to the release and activation of SigI5. This chain is Anti-sigma-I factor RsgI5, found in Acetivibrio thermocellus (strain ATCC 27405 / DSM 1237 / JCM 9322 / NBRC 103400 / NCIMB 10682 / NRRL B-4536 / VPI 7372) (Clostridium thermocellum).